The sequence spans 874 residues: Alanine--tRNA ligase (874 aa).

H564, H568, C665, and H669 together coordinate Zn(2+).

Belongs to the class-II aminoacyl-tRNA synthetase family. Zn(2+) serves as cofactor.

It is found in the cytoplasm. The enzyme catalyses tRNA(Ala) + L-alanine + ATP = L-alanyl-tRNA(Ala) + AMP + diphosphate. Its function is as follows. Catalyzes the attachment of alanine to tRNA(Ala) in a two-step reaction: alanine is first activated by ATP to form Ala-AMP and then transferred to the acceptor end of tRNA(Ala). Also edits incorrectly charged Ser-tRNA(Ala) and Gly-tRNA(Ala) via its editing domain. This Burkholderia vietnamiensis (strain G4 / LMG 22486) (Burkholderia cepacia (strain R1808)) protein is Alanine--tRNA ligase.